The chain runs to 266 residues: Vitamin B12-binding protein (266 aa).

The signal sequence occupies residues 1-22 (MAKQMFRALGALLLTLPVWLYA). The 242-residue stretch at 25-266 (RVITLSPANT…QLCNALSQVN (242 aa)) folds into the Fe/B12 periplasmic-binding domain. Cyanocob(III)alamin contacts are provided by residues Y50 and 242-246 (DWFER). An intrachain disulfide couples C183 to C259.

The protein belongs to the BtuF family. As to quaternary structure, the complex is composed of two ATP-binding proteins (BtuD), two transmembrane proteins (BtuC) and a solute-binding protein (BtuF).

It is found in the periplasm. Functionally, part of the ABC transporter complex BtuCDF involved in vitamin B12 import. Binds vitamin B12 and delivers it to the periplasmic surface of BtuC. In Salmonella typhi, this protein is Vitamin B12-binding protein.